The sequence spans 233 residues: Membrane steroid-binding protein 2 (233 aa).

The chain crosses the membrane as a helical span at residues 23–43 (AFFTVLALAFAVYQVVSGFFV). Positions 70–167 (EITEEELKLY…SKYVKVGTIQ (98 aa)) constitute a Cytochrome b5 heme-binding domain. The segment at 70–167 (EITEEELKLY…SKYVKVGTIQ (98 aa)) is steroid-binding. Composition is skewed to basic and acidic residues over residues 169-181 (KDGE…EPSE) and 202-224 (THDE…KDVA). The segment at 169-233 (KDGEGKESSE…ATDDDDAAKE (65 aa)) is disordered. Phosphothreonine is present on Thr225.

The protein belongs to the cytochrome b5 family. MAPR subfamily.

The protein localises to the cell membrane. This Arabidopsis thaliana (Mouse-ear cress) protein is Membrane steroid-binding protein 2 (MSBP2).